Consider the following 385-residue polypeptide: UPF0744 protein YSD83 (385 aa).

The protein belongs to the UPF0744 family.

This chain is UPF0744 protein YSD83 (YSD83), found in Saccharomyces paradoxus (Yeast).